A 103-amino-acid chain; its full sequence is MAFTPLHDRVLVRRVESEEKTAGGLIIPDSAKEKPAEGLVIAVGAGAKDDDGDRIPMDVKEGDKILFGKWSGTEVTVDGEELLIMKESDILGIITDEAAAKAA.

This sequence belongs to the GroES chaperonin family. As to quaternary structure, heptamer of 7 subunits arranged in a ring. Interacts with the chaperonin GroEL.

The protein localises to the cytoplasm. Together with the chaperonin GroEL, plays an essential role in assisting protein folding. The GroEL-GroES system forms a nano-cage that allows encapsulation of the non-native substrate proteins and provides a physical environment optimized to promote and accelerate protein folding. GroES binds to the apical surface of the GroEL ring, thereby capping the opening of the GroEL channel. This chain is Co-chaperonin GroES, found in Dinoroseobacter shibae (strain DSM 16493 / NCIMB 14021 / DFL 12).